The sequence spans 171 residues: Large ribosomal subunit protein bL9 (171 aa).

Belongs to the bacterial ribosomal protein bL9 family.

Its function is as follows. Binds to the 23S rRNA. The chain is Large ribosomal subunit protein bL9 from Rickettsia felis (strain ATCC VR-1525 / URRWXCal2) (Rickettsia azadi).